We begin with the raw amino-acid sequence, 281 residues long: Bifunctional protein FolD (281 aa).

Residues 165-167 (GRG), Thr-192, and Val-233 contribute to the NADP(+) site.

Belongs to the tetrahydrofolate dehydrogenase/cyclohydrolase family. In terms of assembly, homodimer.

The catalysed reaction is (6R)-5,10-methylene-5,6,7,8-tetrahydrofolate + NADP(+) = (6R)-5,10-methenyltetrahydrofolate + NADPH. The enzyme catalyses (6R)-5,10-methenyltetrahydrofolate + H2O = (6R)-10-formyltetrahydrofolate + H(+). It functions in the pathway one-carbon metabolism; tetrahydrofolate interconversion. Catalyzes the oxidation of 5,10-methylenetetrahydrofolate to 5,10-methenyltetrahydrofolate and then the hydrolysis of 5,10-methenyltetrahydrofolate to 10-formyltetrahydrofolate. The chain is Bifunctional protein FolD from Mycobacterium ulcerans (strain Agy99).